The sequence spans 296 residues: Sperm-activating peptides (296 aa).

3 consecutive propeptides follow at residues 1–134 (MPPG…MYKK), 146–190 (MLSN…MILK), and 290–296 (EVEIKDW).

In terms of biological role, causes stimulation of sperm respiration and motility through intracellular alkalinization, transient elevations of cAMP, cGMP and calcium levels in sperm cells, and transient activation and subsequent inactivation of the membrane form of guanylate cyclase. The chain is Sperm-activating peptides from Strongylocentrotus purpuratus (Purple sea urchin).